The following is a 464-amino-acid chain: Kynureninase 2 (464 aa).

Pyridoxal 5'-phosphate contacts are provided by residues Leu135, Thr136, Phe163 to Asp166, Asp248, His251, and Tyr273. The residue at position 274 (Lys274) is an N6-(pyridoxal phosphate)lysine. Positions 313 and 341 each coordinate pyridoxal 5'-phosphate.

It belongs to the kynureninase family. In terms of assembly, homodimer. Requires pyridoxal 5'-phosphate as cofactor.

It is found in the cytoplasm. The catalysed reaction is L-kynurenine + H2O = anthranilate + L-alanine + H(+). The enzyme catalyses 3-hydroxy-L-kynurenine + H2O = 3-hydroxyanthranilate + L-alanine + H(+). It functions in the pathway amino-acid degradation; L-kynurenine degradation; L-alanine and anthranilate from L-kynurenine: step 1/1. It participates in cofactor biosynthesis; NAD(+) biosynthesis; quinolinate from L-kynurenine: step 2/3. In terms of biological role, catalyzes the cleavage of L-kynurenine (L-Kyn) and L-3-hydroxykynurenine (L-3OHKyn) into anthranilic acid (AA) and 3-hydroxyanthranilic acid (3-OHAA), respectively. This is Kynureninase 2 (bna5-2) from Aspergillus clavatus (strain ATCC 1007 / CBS 513.65 / DSM 816 / NCTC 3887 / NRRL 1 / QM 1276 / 107).